Reading from the N-terminus, the 81-residue chain is MGCDDKCGCAVPCPGGTGCRCTSARSGAAAGEHTTCGCGEHCGCNPCACGREGTPSGRANRRANCSCGAACNCASCGSATA.

The protein belongs to the metallothionein superfamily. Type 15 family.

Its function is as follows. Binds 5 molecules of zinc. May have a role in Zn(2+) homeostasis during embryogenesis. The sequence is that of EC protein I/II from Triticum aestivum (Wheat).